The following is a 120-amino-acid chain: Small ribosomal subunit protein uS13 (120 aa).

A disordered region spans residues 93 to 120 (RKGLPVRGQTTKNNARTRKGKKKTVGSK). Positions 107–120 (ARTRKGKKKTVGSK) are enriched in basic residues.

This sequence belongs to the universal ribosomal protein uS13 family. Part of the 30S ribosomal subunit. Forms a loose heterodimer with protein S19. Forms two bridges to the 50S subunit in the 70S ribosome.

Located at the top of the head of the 30S subunit, it contacts several helices of the 16S rRNA. In the 70S ribosome it contacts the 23S rRNA (bridge B1a) and protein L5 of the 50S subunit (bridge B1b), connecting the 2 subunits; these bridges are implicated in subunit movement. Contacts the tRNAs in the A and P-sites. The chain is Small ribosomal subunit protein uS13 from Helicobacter acinonychis (strain Sheeba).